Consider the following 279-residue polypeptide: Probable endonuclease 4 (279 aa).

The Zn(2+) site is built by histidine 66, histidine 106, glutamate 142, aspartate 176, histidine 179, histidine 213, aspartate 226, histidine 228, and glutamate 258.

The protein belongs to the AP endonuclease 2 family. The cofactor is Zn(2+).

It carries out the reaction Endonucleolytic cleavage to 5'-phosphooligonucleotide end-products.. Its function is as follows. Endonuclease IV plays a role in DNA repair. It cleaves phosphodiester bonds at apurinic or apyrimidinic (AP) sites, generating a 3'-hydroxyl group and a 5'-terminal sugar phosphate. The polypeptide is Probable endonuclease 4 (Photobacterium profundum (strain SS9)).